Here is a 261-residue protein sequence, read N- to C-terminus: Taurine import ATP-binding protein TauB (261 aa).

Residues Leu-4 to Ala-233 form the ABC transporter domain. Gly-38–Thr-45 is a binding site for ATP.

It belongs to the ABC transporter superfamily. Taurine importer (TC 3.A.1.17.1) family. The complex is composed of two ATP-binding proteins (TauB), two transmembrane proteins (TauC) and a solute-binding protein (TauA).

It is found in the cell inner membrane. It catalyses the reaction taurine(out) + ATP + H2O = taurine(in) + ADP + phosphate + H(+). Its function is as follows. Part of the ABC transporter complex TauABC involved in taurine import. Responsible for energy coupling to the transport system. This chain is Taurine import ATP-binding protein TauB, found in Pseudomonas savastanoi pv. phaseolicola (strain 1448A / Race 6) (Pseudomonas syringae pv. phaseolicola (strain 1448A / Race 6)).